We begin with the raw amino-acid sequence, 136 residues long: uncharacterized protein (136 aa).

The next 4 helical transmembrane spans lie at 10–32, 44–66, 70–89, and 102–124; these read SAGI…FIWI, LRCG…ILHF, VLLL…KTLL, and IAGV…WLLF.

The protein localises to the cell membrane. This is an uncharacterized protein from Archaeoglobus fulgidus (strain ATCC 49558 / DSM 4304 / JCM 9628 / NBRC 100126 / VC-16).